The following is a 303-amino-acid chain: Methionine import ATP-binding protein MetN (303 aa).

Residues 1-222 (MLDQISLEIP…PDPKMRHFLG (222 aa)) enclose the ABC transporter domain. 19–26 (GHSGAGKS) provides a ligand contact to ATP.

The protein belongs to the ABC transporter superfamily. Methionine importer (TC 3.A.1.24) family. In terms of assembly, the complex is composed of two ATP-binding proteins (MetN), two transmembrane proteins (MetI) and a solute-binding protein (MetQ).

The protein localises to the cell inner membrane. The catalysed reaction is L-methionine(out) + ATP + H2O = L-methionine(in) + ADP + phosphate + H(+). It catalyses the reaction D-methionine(out) + ATP + H2O = D-methionine(in) + ADP + phosphate + H(+). Part of the ABC transporter complex MetNIQ involved in methionine import. Responsible for energy coupling to the transport system. This Wolinella succinogenes (strain ATCC 29543 / DSM 1740 / CCUG 13145 / JCM 31913 / LMG 7466 / NCTC 11488 / FDC 602W) (Vibrio succinogenes) protein is Methionine import ATP-binding protein MetN.